We begin with the raw amino-acid sequence, 643 residues long: 1-deoxy-D-xylulose-5-phosphate synthase (643 aa).

Residues H71 and 112-114 (SHA) each bind thiamine diphosphate. A Mg(2+)-binding site is contributed by D144. Residues 145–146 (GA), N173, Y284, and E365 each bind thiamine diphosphate. Position 173 (N173) interacts with Mg(2+).

It belongs to the transketolase family. DXPS subfamily. In terms of assembly, homodimer. It depends on Mg(2+) as a cofactor. Thiamine diphosphate is required as a cofactor.

The enzyme catalyses D-glyceraldehyde 3-phosphate + pyruvate + H(+) = 1-deoxy-D-xylulose 5-phosphate + CO2. The protein operates within metabolic intermediate biosynthesis; 1-deoxy-D-xylulose 5-phosphate biosynthesis; 1-deoxy-D-xylulose 5-phosphate from D-glyceraldehyde 3-phosphate and pyruvate: step 1/1. Functionally, catalyzes the acyloin condensation reaction between C atoms 2 and 3 of pyruvate and glyceraldehyde 3-phosphate to yield 1-deoxy-D-xylulose-5-phosphate (DXP). The protein is 1-deoxy-D-xylulose-5-phosphate synthase of Mycobacterium leprae (strain Br4923).